Here is a 211-residue protein sequence, read N- to C-terminus: Endonuclease III (211 aa).

A HhH domain is found at 108–127; that stretch reads REALEALAGVGRKTANVVLN. Residues C187, C194, C197, and C203 each coordinate [4Fe-4S] cluster.

It belongs to the Nth/MutY family. [4Fe-4S] cluster serves as cofactor.

The enzyme catalyses 2'-deoxyribonucleotide-(2'-deoxyribose 5'-phosphate)-2'-deoxyribonucleotide-DNA = a 3'-end 2'-deoxyribonucleotide-(2,3-dehydro-2,3-deoxyribose 5'-phosphate)-DNA + a 5'-end 5'-phospho-2'-deoxyribonucleoside-DNA + H(+). In terms of biological role, DNA repair enzyme that has both DNA N-glycosylase activity and AP-lyase activity. The DNA N-glycosylase activity releases various damaged pyrimidines from DNA by cleaving the N-glycosidic bond, leaving an AP (apurinic/apyrimidinic) site. The AP-lyase activity cleaves the phosphodiester bond 3' to the AP site by a beta-elimination, leaving a 3'-terminal unsaturated sugar and a product with a terminal 5'-phosphate. In Haemophilus influenzae (strain ATCC 51907 / DSM 11121 / KW20 / Rd), this protein is Endonuclease III.